An 89-amino-acid polypeptide reads, in one-letter code: Co-chaperonin GroES (89 aa).

The protein belongs to the GroES chaperonin family. In terms of assembly, heptamer of 7 subunits arranged in a ring. Interacts with the chaperonin GroEL.

The protein resides in the cytoplasm. In terms of biological role, together with the chaperonin GroEL, plays an essential role in assisting protein folding. The GroEL-GroES system forms a nano-cage that allows encapsulation of the non-native substrate proteins and provides a physical environment optimized to promote and accelerate protein folding. GroES binds to the apical surface of the GroEL ring, thereby capping the opening of the GroEL channel. The protein is Co-chaperonin GroES of Pseudothermotoga lettingae (strain ATCC BAA-301 / DSM 14385 / NBRC 107922 / TMO) (Thermotoga lettingae).